The following is a 150-amino-acid chain: Large ribosomal subunit protein uL16 (150 aa).

Belongs to the universal ribosomal protein uL16 family. In terms of assembly, component of the small ribosomal subunit. Mature ribosomes consist of a small (40S) and a large (60S) subunit. The 40S subunit contains about 33 different proteins and 1 molecule of RNA (18S). The 60S subunit contains about 49 different proteins and 3 molecules of RNA (25S, 5.8S and 5S).

The protein is Large ribosomal subunit protein uL16 (RPL10) of Nicotiana tabacum (Common tobacco).